A 71-amino-acid polypeptide reads, in one-letter code: UPF0434 protein Csal_1588 (71 aa).

Belongs to the UPF0434 family.

This is UPF0434 protein Csal_1588 from Chromohalobacter salexigens (strain ATCC BAA-138 / DSM 3043 / CIP 106854 / NCIMB 13768 / 1H11).